Consider the following 320-residue polypeptide: tRNA U34 carboxymethyltransferase (320 aa).

Residues Lys89, Trp103, Lys108, Gly128, 150-152, 179-180, Met194, Tyr198, and Arg313 each bind carboxy-S-adenosyl-L-methionine; these read DPT and IE.

Belongs to the class I-like SAM-binding methyltransferase superfamily. CmoB family. Homotetramer.

The catalysed reaction is carboxy-S-adenosyl-L-methionine + 5-hydroxyuridine(34) in tRNA = 5-carboxymethoxyuridine(34) in tRNA + S-adenosyl-L-homocysteine + H(+). Functionally, catalyzes carboxymethyl transfer from carboxy-S-adenosyl-L-methionine (Cx-SAM) to 5-hydroxyuridine (ho5U) to form 5-carboxymethoxyuridine (cmo5U) at position 34 in tRNAs. The sequence is that of tRNA U34 carboxymethyltransferase from Actinobacillus pleuropneumoniae serotype 7 (strain AP76).